The chain runs to 407 residues: Multifunctional CCA protein (407 aa).

Positions 8 and 11 each coordinate ATP. Residues Gly-8 and Arg-11 each coordinate CTP. 2 residues coordinate Mg(2+): Asp-21 and Asp-23. ATP contacts are provided by Arg-91, Arg-137, and Arg-140. CTP is bound by residues Arg-91, Arg-137, and Arg-140. The region spanning 228 to 329 (TGIHTLMVAQ…IKIFDKMDVW (102 aa)) is the HD domain.

Belongs to the tRNA nucleotidyltransferase/poly(A) polymerase family. Bacterial CCA-adding enzyme type 1 subfamily. In terms of assembly, monomer. Can also form homodimers and oligomers. The cofactor is Mg(2+). Ni(2+) is required as a cofactor.

It carries out the reaction a tRNA precursor + 2 CTP + ATP = a tRNA with a 3' CCA end + 3 diphosphate. The enzyme catalyses a tRNA with a 3' CCA end + 2 CTP + ATP = a tRNA with a 3' CCACCA end + 3 diphosphate. Functionally, catalyzes the addition and repair of the essential 3'-terminal CCA sequence in tRNAs without using a nucleic acid template. Adds these three nucleotides in the order of C, C, and A to the tRNA nucleotide-73, using CTP and ATP as substrates and producing inorganic pyrophosphate. tRNA 3'-terminal CCA addition is required both for tRNA processing and repair. Also involved in tRNA surveillance by mediating tandem CCA addition to generate a CCACCA at the 3' terminus of unstable tRNAs. While stable tRNAs receive only 3'-terminal CCA, unstable tRNAs are marked with CCACCA and rapidly degraded. This Aliivibrio fischeri (strain ATCC 700601 / ES114) (Vibrio fischeri) protein is Multifunctional CCA protein.